Reading from the N-terminus, the 354-residue chain is Peptide chain release factor 1 (354 aa).

Residue Q233 is modified to N5-methylglutamine.

It belongs to the prokaryotic/mitochondrial release factor family. In terms of processing, methylated by PrmC. Methylation increases the termination efficiency of RF1.

The protein localises to the cytoplasm. Its function is as follows. Peptide chain release factor 1 directs the termination of translation in response to the peptide chain termination codons UAG and UAA. The protein is Peptide chain release factor 1 of Clostridioides difficile (strain 630) (Peptoclostridium difficile).